The following is a 333-amino-acid chain: Diaminopimelate epimerase (333 aa).

Positions 24 and 79 each coordinate substrate. Cysteine 88 (proton donor) is an active-site residue. Substrate-binding positions include 89–90, asparagine 176, asparagine 210, and 228–229; these read GN and ER. Cysteine 237 serves as the catalytic Proton acceptor. 238–239 is a substrate binding site; sequence GT.

The protein belongs to the diaminopimelate epimerase family. In terms of assembly, homodimer.

Its subcellular location is the cytoplasm. It catalyses the reaction (2S,6S)-2,6-diaminopimelate = meso-2,6-diaminopimelate. Its pathway is amino-acid biosynthesis; L-lysine biosynthesis via DAP pathway; DL-2,6-diaminopimelate from LL-2,6-diaminopimelate: step 1/1. In terms of biological role, catalyzes the stereoinversion of LL-2,6-diaminopimelate (L,L-DAP) to meso-diaminopimelate (meso-DAP), a precursor of L-lysine and an essential component of the bacterial peptidoglycan. This is Diaminopimelate epimerase from Clostridium acetobutylicum (strain ATCC 824 / DSM 792 / JCM 1419 / IAM 19013 / LMG 5710 / NBRC 13948 / NRRL B-527 / VKM B-1787 / 2291 / W).